The sequence spans 641 residues: MELKGVQPSNGSANGNGTTNAASTEKTDAEKHTPERTNWGNGLEFLMSCISVSVGLGNVWRFPFTAYENGGGAFLIPYIIVLFLIGKPMYYLEMIMGQFTSQGTVKIWSVVPGFVGVGYGQAFGTICIISYYSSLLALTLYYLFVSFQSELPWSYCRDEWTNCVNSRPQEYVDNLLSGVSLANESARNFSAIGSVANEETEKLQSSSELYFLNVVIKEKLDISDGVGDPDWKLTLALLAAWVVIFLVIMRGVKSSGKAAYFLALFPYVVLFVLLIRAVTLEGARDGILFFLEPQWGELLNPTVWKEAVVQCFFSLAVGSGPIIMFASYNRFDHGIYRDAMIVTTLDTLTSLLGGITIFAILGNLAHNLQIENIRDVVRSGTGLAFISYPDAISKFKAVPQLFSVLFFFMLFVLGIGSIVALQSTIVTIICDQFKGLKYWKVALITSACGFLMGLVYVTPGGQWILTLVDFYGGTYVVFILAIFELAGIVWVYGLQNFCDDIEFMCNRRVSLYWRMCWSFFTPVMMIIIFIYSMVTIEPIKYSELYFPEAANIAGWLLFAIGAAQFPLWGLWYVSRHPQGTYWKSLKASMKPSERWGPANPETRREWVIFKNHKAAQRATQKDVSKLGFFWRKLTNFCGSNK.

The interval 1–36 is disordered; sequence MELKGVQPSNGSANGNGTTNAASTEKTDAEKHTPER. Residues 1-38 are Cytoplasmic-facing; the sequence is MELKGVQPSNGSANGNGTTNAASTEKTDAEKHTPERTN. Over residues 9–24 the composition is skewed to low complexity; sequence SNGSANGNGTTNAAST. A compositionally biased stretch (basic and acidic residues) spans 25–35; it reads EKTDAEKHTPE. Transmembrane regions (helical) follow at residues 39–59, 72–92, and 109–129; these read WGNG…LGNV, GAFL…MYYL, and SVVP…ICII. N-linked (GlcNAc...) asparagine glycans are attached at residues N183 and N188. The next 9 membrane-spanning stretches (helical) occupy residues 229–249, 258–278, 307–327, 341–361, 401–421, 441–461, 474–494, 516–536, and 552–572; these read PDWK…LVIM, AAYF…IRAV, AVVQ…MFAS, IVTT…FAIL, LFSV…IVAL, VALI…TPGG, TYVV…VYGL, CWSF…MVTI, and IAGW…GLWY.

The protein belongs to the sodium:neurotransmitter symporter (SNF) (TC 2.A.22) family.

It is found in the membrane. In terms of biological role, unusual broad substrate spectrum amino acid:sodium cotransporter that promotes absorption of the D isomers of essential amino acids. Neutral amino acids are the preferred substrates, especially methionine and phenylalanine. This is Sodium-dependent nutrient amino acid transporter 1 from Drosophila erecta (Fruit fly).